A 471-amino-acid chain; its full sequence is Heat shock 70 kDa protein 13 (471 aa).

Residues M1 to A22 form the signal peptide. The segment at E315 to N337 is disordered.

The protein belongs to the heat shock protein 70 family. Binds UBQLN2.

The protein localises to the microsome. It is found in the endoplasmic reticulum. Functionally, has peptide-independent ATPase activity. This is Heat shock 70 kDa protein 13 (HSPA13) from Bos taurus (Bovine).